Consider the following 120-residue polypeptide: Non-specific lipid-transfer protein (120 aa).

The signal sequence occupies residues 1–26; the sequence is MGVLRSSFVAMMVMYMVLATTPNAEA. Disulfide bonds link Cys-30/Cys-79, Cys-40/Cys-56, Cys-57/Cys-102, and Cys-77/Cys-116.

It belongs to the plant LTP family. Expressed in protoderm cells of somatic and zygotic embryos, and transiently expressed in epidermal cell layers of leaves, flowers and seeds.

Functionally, plant non-specific lipid-transfer proteins transfer phospholipids as well as galactolipids across membranes. May play a role in wax or cutin deposition in the cell walls of expanding epidermal cells and certain secretory tissues. This chain is Non-specific lipid-transfer protein (EP2), found in Daucus carota (Wild carrot).